Reading from the N-terminus, the 459-residue chain is Proton-coupled folate transporter (459 aa).

At Met-1 the chain carries N-acetylmethionine. Residues 1-25 (MEGRVSPVGSSHRLLTAAVLFRGPV) lie on the Cytoplasmic side of the membrane. Ser-6 carries the phosphoserine modification. A helical transmembrane segment spans residues 26 to 44 (EPLVFLANFALVLQGPLTT). Residues 45 to 82 (QYIWHRISTELGYNGTRHRENCGNQSADPVLKEVETLT) lie on the Extracellular side of the membrane. N-linked (GlcNAc...) asparagine glycosylation is found at Asn-58 and Asn-68. Cysteines 66 and 298 form a disulfide. A helical membrane pass occupies residues 83–108 (SHWTLYMNVGGFLVGLFWSTLLGAWS). Topologically, residues 109–112 (DRVG) are cytoplasmic. The chain crosses the membrane as a helical span at residues 113-135 (RRPLLVLASLGLLLQAVVSIFVV). Residues 136–140 (QLQLH) lie on the Extracellular side of the membrane. The helical transmembrane segment at 141-154 (IGFFVLGRALCALL) threads the bilayer. At 155-177 (GDFNGLLAASFASVADVSSNHSR) the chain is on the cytoplasmic side. Residues Asp-156 and Glu-185 each contribute to the H(+) site. A helical transmembrane segment spans residues 178 to 203 (TFRMALLEACIGVAGTLASLLGGHWL). Over 204-208 (RAQGY) the chain is Extracellular. A helical membrane pass occupies residues 209–227 (ANPFWLALAVLIVMTLYAA). The Cytoplasmic segment spans residues 228 to 266 (FCFGETVKEPKSTRLFTLRHHRSIVQLYVVPAPEKSRMH). A helical transmembrane segment spans residues 267 to 289 (LALYSLAIFVVVTVHFGAQDILT). H(+) is bound at residue His-281. Residues 290–302 (LYELSTPLCWDSK) lie on the Extracellular side of the membrane. Residues 303–325 (LIGYGSAAQHLPYLTSLLGLRLL) form a helical membrane-spanning segment. Residues 326–331 (QFCLAD) lie on the Cytoplasmic side of the membrane. A helical membrane pass occupies residues 332–351 (TWVAEIGLAFNILGMVVFAF). Residues 352 to 355 (ATIT) are Extracellular-facing. Residues 356-376 (PLMFTGYGLLFLSLVTTPVIR) form a helical membrane-spanning segment. Over 377–388 (AKLSKLVSESEQ) the chain is Cytoplasmic. Residues 389-414 (GALFSAVACVNSLAMLMASGIFNSLY) form a helical membrane-spanning segment. The Extracellular segment spans residues 415–422 (PATLNFMK). Residues 423–441 (GFPFLLGAGLLFIPAILIG) form a helical membrane-spanning segment. Residues 442 to 459 (VLEKVNPHPEFQQFPQNS) lie on the Cytoplasmic side of the membrane.

Belongs to the major facilitator superfamily. SLC46A family. Monomer. As to expression, expressed almost exclusively in the small intestine: expressed at high level in the upper half of the small intestine (duodenum and jejunum), expression decreases downwardly in the subsequent quarter and is undetectable in the last quarter (the lowest ileum). Expressed at low level in other tissues, including liver.

The protein localises to the cell membrane. It is found in the apical cell membrane. Its subcellular location is the basolateral cell membrane. The protein resides in the endosome membrane. It localises to the cytoplasm. The enzyme catalyses folate(in) + H(+)(in) = folate(out) + H(+)(out). The catalysed reaction is (6S)-5-methyl-5,6,7,8-tetrahydrofolate(in) + H(+)(in) = (6S)-5-methyl-5,6,7,8-tetrahydrofolate(out) + H(+)(out). It catalyses the reaction methotrexate(in) + H(+)(in) = methotrexate(out) + H(+)(out). It carries out the reaction pemetrexed(in) + H(+)(in) = pemetrexed(out) + H(+)(out). With respect to regulation, in contrast to human ortholog, not inhibited by myricetin. Its function is as follows. Proton-coupled folate symporter that mediates folate absorption using an H(+) gradient as a driving force. Involved in the intestinal absorption of folates at the brush-border membrane of the proximal jejunum, and the transport from blood to cerebrospinal fluid across the choroid plexus. Functions at acidic pH via alternate outward- and inward-open conformation states. Protonation of residues in the outward open state primes the protein for transport. Binding of folate promotes breaking of salt bridge network and subsequent closure of the extracellular gate, leading to the inward-open state and release of protons and folate. Also able to transport antifolate drugs, such as methotrexate and pemetrexed. Involved in FOLR1-mediated endocytosis by serving as a route of export of folates from acidified endosomes. Also acts as a lower-affinity, pH-independent heme carrier protein and constitutes the main importer of heme in the intestine. Imports heme in the retina and retinal pigment epithelium, in neurons of the hippocampus, in hepatocytes and in the renal epithelial cells. Hence, participates in the trafficking of heme and increases intracellular iron content. In Rattus norvegicus (Rat), this protein is Proton-coupled folate transporter.